The chain runs to 236 residues: Endonuclease V (236 aa).

2 residues coordinate Mg(2+): Asp-47 and Asp-115.

The protein belongs to the endonuclease V family. It depends on Mg(2+) as a cofactor.

It localises to the cytoplasm. The enzyme catalyses Endonucleolytic cleavage at apurinic or apyrimidinic sites to products with a 5'-phosphate.. Its function is as follows. DNA repair enzyme involved in the repair of deaminated bases. Selectively cleaves double-stranded DNA at the second phosphodiester bond 3' to a deoxyinosine leaving behind the intact lesion on the nicked DNA. This Xanthomonas campestris pv. campestris (strain 8004) protein is Endonuclease V.